Reading from the N-terminus, the 464-residue chain is MASESGKLWGGRFVGAVDPIMEKFNSSISYDRHLWNVDVQGSKAYSRGLEKAGLLTKAEMQQILQGLDKVAEEWAQGTFKLHPNDEDIHTANERRLKELIGEAAGKLHTGRSRNDQVVTDLRLWMRQTCSKLSALLRVLIGTMVDRAEAERDVLFPGYTHLQRAQPIRWSHWILSHAVALTRDSERLLEVQKRINVLPLGSGAIAGNPLGVDRELLRAELNFGAITLNSMDATSERDFVAEFLFWASLCMTHLSRMAEDLILYGTKEFSFVQLSDAYSTGSSLMPQKKNPDSLELIRSKAGRVFGRCAGLLMTLKGLPSTYNKDLQEDKEAVFEVSDTMIAVLQVATGVISTLQIHRENMKQALSPDMLATDLAYYLVRKGMPFRQAHEASGKAVFMAETKGVALNLLSLQELQTISPLFSGDVSHVWDYSHSVEQYSALGGTAKSSVEWQIRQVRALLQAQEP.

Ala-2 carries the N-acetylalanine modification. An N6-acetyllysine modification is found at Lys-7. Position 27 (Ser-27) interacts with 2-(N(omega)-L-arginino)succinate. Residue Lys-69 is modified to N6-acetyllysine. 2-(N(omega)-L-arginino)succinate-binding residues include Asn-114 and Thr-159. His-160 functions as the Proton acceptor in the catalytic mechanism. The active-site Proton donor is the Ser-281. Lys-288 carries the post-translational modification N6-acetyllysine. 2-(N(omega)-L-arginino)succinate is bound by residues Asn-289, Tyr-321, Gln-326, and Lys-329.

Belongs to the lyase 1 family. Argininosuccinate lyase subfamily. In terms of assembly, homotetramer. Forms tissue-specific complexes with ASS1, SLC7A1, HSP90AA1 and nitric oxide synthase NOS1, NOS2 or NOS3; the complex maintenance is independent of ASL catalytic function. Post-translationally, acetylation modifies enzyme activity in response to alterations of extracellular nutrient availability. Acetylation increased with trichostin A (TSA) or with nicotinamide (NAM). Glucose increases acetylation by about a factor of 3 with decreasing enzyme activity. Acetylation on Lys-288 is decreased on the addition of extra amino acids resulting in activation of enzyme activity. In terms of tissue distribution, expressed in lung and brain (at protein level).

The catalysed reaction is 2-(N(omega)-L-arginino)succinate = fumarate + L-arginine. It participates in amino-acid biosynthesis; L-arginine biosynthesis; L-arginine from L-ornithine and carbamoyl phosphate: step 3/3. The protein operates within nitrogen metabolism; urea cycle; L-arginine and fumarate from (N(omega)-L-arginino)succinate: step 1/1. Enzyme activity is regulated by acetylation. Functionally, catalyzes the reversible cleavage of L-argininosuccinate to fumarate and L-arginine, an intermediate step reaction in the urea cycle mostly providing for hepatic nitrogen detoxification into excretable urea as well as de novo L-arginine synthesis in nonhepatic tissues. Essential regulator of intracellular and extracellular L-arginine pools. As part of citrulline-nitric oxide cycle, forms tissue-specific multiprotein complexes with argininosuccinate synthase ASS1, transport protein SLC7A1 and nitric oxide synthase NOS1, NOS2 or NOS3, allowing for cell-autonomous L-arginine synthesis while channeling extracellular L-arginine to nitric oxide synthesis pathway. This chain is Argininosuccinate lyase (Asl), found in Mus musculus (Mouse).